A 305-amino-acid polypeptide reads, in one-letter code: RxLR effector protein 17 (305 aa).

The N-terminal stretch at 1-24 (MQSILWFALIASVVFLVLVDLASG) is a signal peptide. Residues 45–60 (RLLRAAHLDRKLSEER) carry the RxLR-dEER motif. N-linked (GlcNAc...) asparagine glycosylation is found at N207 and N227. Positions 247–269 (LHLKWAVEAKSPKDVVERILKDL) are w motif.

The protein belongs to the RxLR effector family. Interacts with host A.thaliana At1G14340.

Its subcellular location is the secreted. It localises to the host cell membrane. Its function is as follows. Secreted effector that confers enhanced plant susceptibility during both compatible and incompatible interactions between the pathogen and its host. Promotes the sexual reproduction of the pathogen in the plant host. The polypeptide is RxLR effector protein 17 (Hyaloperonospora arabidopsidis (strain Emoy2) (Downy mildew agent)).